The following is a 252-amino-acid chain: Imidazole glycerol phosphate synthase subunit HisF (252 aa).

Catalysis depends on residues D11 and D130.

Belongs to the HisA/HisF family. As to quaternary structure, heterodimer of HisH and HisF.

It is found in the cytoplasm. It carries out the reaction 5-[(5-phospho-1-deoxy-D-ribulos-1-ylimino)methylamino]-1-(5-phospho-beta-D-ribosyl)imidazole-4-carboxamide + L-glutamine = D-erythro-1-(imidazol-4-yl)glycerol 3-phosphate + 5-amino-1-(5-phospho-beta-D-ribosyl)imidazole-4-carboxamide + L-glutamate + H(+). It participates in amino-acid biosynthesis; L-histidine biosynthesis; L-histidine from 5-phospho-alpha-D-ribose 1-diphosphate: step 5/9. IGPS catalyzes the conversion of PRFAR and glutamine to IGP, AICAR and glutamate. The HisF subunit catalyzes the cyclization activity that produces IGP and AICAR from PRFAR using the ammonia provided by the HisH subunit. The sequence is that of Imidazole glycerol phosphate synthase subunit HisF from Pelotomaculum thermopropionicum (strain DSM 13744 / JCM 10971 / SI).